A 453-amino-acid polypeptide reads, in one-letter code: Phosphoglucosamine mutase (453 aa).

The active-site Phosphoserine intermediate is Ser108. Mg(2+) contacts are provided by Ser108, Asp247, Asp249, and Asp251. Position 108 is a phosphoserine (Ser108).

The protein belongs to the phosphohexose mutase family. It depends on Mg(2+) as a cofactor. Activated by phosphorylation.

It carries out the reaction alpha-D-glucosamine 1-phosphate = D-glucosamine 6-phosphate. Its function is as follows. Catalyzes the conversion of glucosamine-6-phosphate to glucosamine-1-phosphate. The protein is Phosphoglucosamine mutase of Methylobacillus flagellatus (strain ATCC 51484 / DSM 6875 / VKM B-1610 / KT).